The chain runs to 135 residues: Large-conductance mechanosensitive channel (135 aa).

Transmembrane regions (helical) follow at residues 10-30 (FAMKGNVVDMAVGVIIGAAFG) and 76-96 (GAFIQTVFDFAIVAFAIFCAI).

It belongs to the MscL family. In terms of assembly, homopentamer.

It localises to the cell inner membrane. Channel that opens in response to stretch forces in the membrane lipid bilayer. May participate in the regulation of osmotic pressure changes within the cell. This is Large-conductance mechanosensitive channel from Proteus mirabilis (strain HI4320).